The sequence spans 269 residues: Regulatory protein RecX (269 aa).

The protein belongs to the RecX family.

The protein resides in the cytoplasm. Its function is as follows. Modulates RecA activity. The chain is Regulatory protein RecX from Geobacillus thermodenitrificans (strain NG80-2).